The chain runs to 569 residues: 3-(3-hydroxy-phenyl)propionate/3-hydroxycinnamic acid hydroxylase (569 aa).

FAD-binding positions include 8–37 (DVVI…VVDE) and 273–283 (FREGRLMLAGD).

Belongs to the PheA/TfdB FAD monooxygenase family. Requires FAD as cofactor.

The enzyme catalyses 3-(3-hydroxyphenyl)propanoate + NADH + O2 + H(+) = 3-(2,3-dihydroxyphenyl)propanoate + NAD(+) + H2O. The catalysed reaction is (2E)-3-(3-hydroxyphenyl)prop-2-enoate + NADH + O2 + H(+) = (2E)-3-(2,3-dihydroxyphenyl)prop-2-enoate + NAD(+) + H2O. Its pathway is aromatic compound metabolism; 3-phenylpropanoate degradation. Catalyzes the insertion of one atom of molecular oxygen into position 2 of the phenyl ring of 3-(3-hydroxyphenyl)propionate (3-HPP) and hydroxycinnamic acid (3HCI). In Mycolicibacterium gilvum (strain PYR-GCK) (Mycobacterium gilvum (strain PYR-GCK)), this protein is 3-(3-hydroxy-phenyl)propionate/3-hydroxycinnamic acid hydroxylase.